The sequence spans 359 residues: UPF0284 protein MAE_56900 (359 aa).

It belongs to the UPF0284 family.

This is UPF0284 protein MAE_56900 from Microcystis aeruginosa (strain NIES-843 / IAM M-2473).